The chain runs to 379 residues: Spermidine/putrescine import ATP-binding protein PotA (379 aa).

An ABC transporter domain is found at 10 to 240 (VTIDQVSKAY…PATDFVAKFI (231 aa)). Residue 42–49 (GPSGCGKT) participates in ATP binding.

It belongs to the ABC transporter superfamily. Spermidine/putrescine importer (TC 3.A.1.11.1) family. In terms of assembly, the complex is composed of two ATP-binding proteins (PotA), two transmembrane proteins (PotB and PotC) and a solute-binding protein (PotD).

It is found in the cell inner membrane. The catalysed reaction is ATP + H2O + polyamine-[polyamine-binding protein]Side 1 = ADP + phosphate + polyamineSide 2 + [polyamine-binding protein]Side 1.. Its function is as follows. Part of the ABC transporter complex PotABCD involved in spermidine/putrescine import. Responsible for energy coupling to the transport system. This is Spermidine/putrescine import ATP-binding protein PotA from Treponema pallidum (strain Nichols).